We begin with the raw amino-acid sequence, 548 residues long: 5-epi-aristolochene synthase 3 (548 aa).

Mg(2+)-binding residues include Asp301, Asp305, Asp444, Thr448, and Glu452. The DDXXD motif signature appears at 301-305 (DDTFD).

This sequence belongs to the terpene synthase family. Monomer. Mg(2+) is required as a cofactor. As to expression, expressed in roots, but not in shoots.

It localises to the cytoplasm. The catalysed reaction is (2E,6E)-farnesyl diphosphate = (+)-5-epi-aristolochene + diphosphate. The protein operates within secondary metabolite biosynthesis; terpenoid biosynthesis. Functionally, catalyzes the cyclization of trans,trans-farnesyl diphosphate (FPP) to the bicyclic intermediate 5-epi-aristolochene, initial step in the conversion of FPP to the sesquiterpenoid antifungal phytoalexin capsidiol. Produces germacrene A as an enzyme-bound intermediate that is not released by the enzyme, but is further cyclized to produce the bicyclic 5-epi-aristolochene. The polypeptide is 5-epi-aristolochene synthase 3 (Nicotiana attenuata (Coyote tobacco)).